The chain runs to 329 residues: Ketol-acid reductoisomerase (NADP(+)) (329 aa).

One can recognise a KARI N-terminal Rossmann domain in the interval 2-182; it reads TQLFYDTDAD…GGTRAGILET (181 aa). NADP(+) is bound by residues 25-28, Ser-51, Ser-53, and 83-86; these read YGSQ and DEFQ. Residue His-108 is part of the active site. Gly-134 is a binding site for NADP(+). The region spanning 183–328 is the KARI C-terminal knotted domain; that stretch reads NFKEETETDL…KGLRSMFSWL (146 aa). Positions 191, 195, 227, and 231 each coordinate Mg(2+). A substrate-binding site is contributed by Ser-252.

It belongs to the ketol-acid reductoisomerase family. It depends on Mg(2+) as a cofactor.

The enzyme catalyses (2R)-2,3-dihydroxy-3-methylbutanoate + NADP(+) = (2S)-2-acetolactate + NADPH + H(+). It catalyses the reaction (2R,3R)-2,3-dihydroxy-3-methylpentanoate + NADP(+) = (S)-2-ethyl-2-hydroxy-3-oxobutanoate + NADPH + H(+). The protein operates within amino-acid biosynthesis; L-isoleucine biosynthesis; L-isoleucine from 2-oxobutanoate: step 2/4. It functions in the pathway amino-acid biosynthesis; L-valine biosynthesis; L-valine from pyruvate: step 2/4. Involved in the biosynthesis of branched-chain amino acids (BCAA). Catalyzes an alkyl-migration followed by a ketol-acid reduction of (S)-2-acetolactate (S2AL) to yield (R)-2,3-dihydroxy-isovalerate. In the isomerase reaction, S2AL is rearranged via a Mg-dependent methyl migration to produce 3-hydroxy-3-methyl-2-ketobutyrate (HMKB). In the reductase reaction, this 2-ketoacid undergoes a metal-dependent reduction by NADPH to yield (R)-2,3-dihydroxy-isovalerate. This is Ketol-acid reductoisomerase (NADP(+)) from Prochlorococcus marinus (strain MIT 9215).